Here is a 170-residue protein sequence, read N- to C-terminus: Lipoprotein signal peptidase (170 aa).

Transmembrane regions (helical) follow at residues leucine 11–phenylalanine 31, isoleucine 41–serine 61, tryptophan 69–leucine 89, and aspartate 95–tyrosine 115. Catalysis depends on residues aspartate 125 and aspartate 144. The chain crosses the membrane as a helical span at residues tyrosine 136–leucine 156.

This sequence belongs to the peptidase A8 family.

The protein localises to the cell inner membrane. The catalysed reaction is Release of signal peptides from bacterial membrane prolipoproteins. Hydrolyzes -Xaa-Yaa-Zaa-|-(S,diacylglyceryl)Cys-, in which Xaa is hydrophobic (preferably Leu), and Yaa (Ala or Ser) and Zaa (Gly or Ala) have small, neutral side chains.. It participates in protein modification; lipoprotein biosynthesis (signal peptide cleavage). Its function is as follows. This protein specifically catalyzes the removal of signal peptides from prolipoproteins. The protein is Lipoprotein signal peptidase of Pseudomonas fluorescens.